The sequence spans 47 residues: MKKITGIILLLLAVIILSACQANYIRDVQGGTVSPSSTAEVTGLATQ.

A signal peptide spans 1–19 (MKKITGIILLLLAVIILSA). A lipid anchor (N-palmitoyl cysteine) is attached at C20. C20 carries the S-diacylglycerol cysteine lipid modification.

Its subcellular location is the cell outer membrane. Functionally, lysis proteins are required for both colicin release and partial cell lysis. This is Lysis protein for colicins E2 and E3 (hic) from Escherichia coli.